The chain runs to 598 residues: Transcription factor himD (598 aa).

Residues 18–47 (CQNCARAKIRCIRSVPTGSCDRCERLRKTC) constitute a DNA-binding region (zn(2)-C6 fungal-type). The tract at residues 87–110 (TVSEASIDDKSPTTTPTTPRPPPD) is disordered.

It is found in the nucleus. Transcription factor that, with himB, probably co-regulates the him gene cluster that mediates the biosynthesis of himeic acid A, a ubiquitin-activating enzyme (E1) inhibitor. This is Transcription factor himD from Aspergillus japonicus.